We begin with the raw amino-acid sequence, 494 residues long: Gabija protein GajB (494 aa).

One can recognise a UvrD-like helicase ATP-binding domain in the interval 1–229; it reads MSREQIIKDG…YHLTSNFRCC (229 aa). 17-24 lines the ATP pocket; the sequence is AGAGSGKT.

Belongs to the helicase family. As to quaternary structure, homodimer. Interacts with GajA; 2 GajB dimers dock at opposite sides of the GajA complex to form a 4:4 GajA-GajB assembly (GajAB). GajAB interacts with Bacillus phage Phi3T Gad1 protein; this interaction forms a 4:4:8 GajAB-Gad1 complex and leads to GajAB inhibition.

In terms of biological role, component of antiviral defense system Gabija type I, composed of GajA and GajB. Expression of Gabija type I in B.subtilis (strain BEST7003) confers resistance to phages phi105, phi29, rho14, SpBeta and SBSphiC. Expression of Gabija type I in E.coli B (strain ATCC 11303) confers resistance to phage T7. May be a helicase or contribute to GajA activation. This is Gabija protein GajB from Bacillus cereus (strain VD045).